The primary structure comprises 644 residues: Protein ETHYLENE-INSENSITIVE 3-like 1b (644 aa).

2 disordered regions span residues Gln-47–Val-75 and Glu-97–Arg-131. The span at Ala-66 to Val-75 shows a compositional bias: acidic residues.

The protein belongs to the EIN3 family. Highly expressed in roots. Expressed at low levels in leaves and panicles.

The protein resides in the nucleus. Transcription factor acting as a positive regulator in the ethylene response pathway. Involved in wound signaling by binding specifically to the DNA sequence 5'-ATGTACCT-3' found in the promoter of some wound-inducible genes. Binds directly to the DNA sequence 5'-TGTTACAAATACC-3' in the promoter of the GA20OX2 gene to activate its expression at the transcriptional level during ethylene signaling. This is Protein ETHYLENE-INSENSITIVE 3-like 1b from Oryza sativa subsp. japonica (Rice).